Here is a 212-residue protein sequence, read N- to C-terminus: Kynurenine formamidase (212 aa).

W18 is a binding site for substrate. Positions 48, 52, and 54 each coordinate Zn(2+). H58 (proton donor/acceptor) is an active-site residue. Zn(2+) is bound by residues H160 and E172.

It belongs to the Cyclase 1 superfamily. KynB family. In terms of assembly, homodimer. Zn(2+) is required as a cofactor.

The enzyme catalyses N-formyl-L-kynurenine + H2O = L-kynurenine + formate + H(+). It functions in the pathway amino-acid degradation; L-tryptophan degradation via kynurenine pathway; L-kynurenine from L-tryptophan: step 2/2. Catalyzes the hydrolysis of N-formyl-L-kynurenine to L-kynurenine, the second step in the kynurenine pathway of tryptophan degradation. This is Kynurenine formamidase from Paraburkholderia xenovorans (strain LB400).